We begin with the raw amino-acid sequence, 284 residues long: Parvulin-like PPIase (284 aa).

The signal sequence occupies residues 1–20 (MKKLSIVLLSVSMLSSIAFA). In terms of domain architecture, PpiC spans 139-232 (KEQIKVAHIL…YGWHIIKVLE (94 aa)).

This sequence belongs to the PpiC/parvulin rotamase family.

The protein resides in the cell outer membrane. It carries out the reaction [protein]-peptidylproline (omega=180) = [protein]-peptidylproline (omega=0). The chain is Parvulin-like PPIase (plp) from Rickettsia bellii (strain RML369-C).